The chain runs to 927 residues: DNA mismatch repair protein MutS (927 aa).

A disordered region spans residues 44–80 (DESLKRPRNRHKPTSVPSIPLDSESQEQLETADNDND). The span at 67-79 (ESQEQLETADNDN) shows a compositional bias: acidic residues. Residue 725–732 (GPNASGKS) coordinates ATP.

Belongs to the DNA mismatch repair MutS family.

Its function is as follows. This protein is involved in the repair of mismatches in DNA. It is possible that it carries out the mismatch recognition step. This protein has a weak ATPase activity. The sequence is that of DNA mismatch repair protein MutS from Prochlorococcus marinus (strain MIT 9303).